We begin with the raw amino-acid sequence, 912 residues long: Protein translocase subunit SecA (912 aa).

ATP-binding positions include Gln-87, 105–109, and Asp-508; that span reads GEGKT. The tract at residues 869–912 is disordered; sequence EQMQGGNAPVPVSQVTRDEPKVGRNDPCPCGSGKKYKHCHGQLS. Residues Cys-896, Cys-898, Cys-907, and His-908 each contribute to the Zn(2+) site. Residues 902–912 are compositionally biased toward basic residues; sequence KKYKHCHGQLS.

It belongs to the SecA family. As to quaternary structure, monomer and homodimer. Part of the essential Sec protein translocation apparatus which comprises SecA, SecYEG and auxiliary proteins SecDF-YajC and YidC. Zn(2+) is required as a cofactor.

It is found in the cell inner membrane. The protein localises to the cytoplasm. The enzyme catalyses ATP + H2O + cellular proteinSide 1 = ADP + phosphate + cellular proteinSide 2.. In terms of biological role, part of the Sec protein translocase complex. Interacts with the SecYEG preprotein conducting channel. Has a central role in coupling the hydrolysis of ATP to the transfer of proteins into and across the cell membrane, serving both as a receptor for the preprotein-SecB complex and as an ATP-driven molecular motor driving the stepwise translocation of polypeptide chains across the membrane. The chain is Protein translocase subunit SecA from Xanthomonas axonopodis pv. citri (strain 306).